The sequence spans 242 residues: Lactate utilization protein A 2 (242 aa).

Belongs to the LutA/YkgE family.

Its function is as follows. Is involved in L-lactate degradation and allows cells to grow with lactate as the sole carbon source. The protein is Lactate utilization protein A 2 of Bacillus cereus (strain AH820).